The primary structure comprises 458 residues: Tissue-resident T-cell transcription regulator protein ZNF683 (458 aa).

2 disordered regions span residues 84-109 (PQDL…TDSE) and 249-275 (TLHS…APTR). C2H2-type zinc fingers lie at residues 301-323 (YECN…LRVH), 329-351 (FQCA…HLVH), and 357-379 (HQCQ…LRLH).

The protein belongs to the krueppel C2H2-type zinc-finger protein family. Expressed in tissue-resident memory T (Trm) cell population in non-lymphoid organs, such as skin and gut. Expressed in innate lymphocytes, including tissue-resident natural killer (trNK) and natural killer T (NKT) cells in thymus, spleen and liver.

The protein resides in the nucleus. Its function is as follows. Transcription factor that mediates a transcriptional program in various innate and adaptive immune tissue-resident lymphocyte T-cell types such as tissue-resident memory T (Trm), natural killer (trNK) and natural killer T (NKT) cells and negatively regulates gene expression of proteins that promote the egress of tissue-resident T-cell populations from non-lymphoid organs. Plays a role in the development, retention and long-term establishment of adaptive and innate tissue-resident lymphocyte T-cell types in non-lymphoid organs, such as the skin and gut, but also in other nonbarrier tissues like liver and kidney, and therefore may provide immediate immunological protection against reactivating infections or viral reinfection. Also plays a role in the differentiation of both thymic and peripheral NKT cells. Negatively regulates the accumulation of interferon-gamma (IFN-gamma) in NKT cells at steady state or after antigenic stimulation. Positively regulates granzyme B production in NKT cells after innate stimulation. Associates with the transcriptional repressor PRDM1/BLIMP1 to chromatin at gene promoter regions. The chain is Tissue-resident T-cell transcription regulator protein ZNF683 from Mus musculus (Mouse).